We begin with the raw amino-acid sequence, 77 residues long: Ubiquitin-like protein NEDD8 (77 aa).

Residues 70–72 (VLA) are interaction with uba-3. G76 participates in a covalent cross-link: Glycyl lysine isopeptide (Gly-Lys) (interchain with K-? in acceptor proteins). F77 is a propeptide.

Belongs to the ubiquitin family. In terms of assembly, interacts with dcn-1. Covalently attached to cullins. May interact with atx-3. In terms of processing, cleavage of precursor form is necessary for function.

The protein localises to the nucleus. The protein resides in the cytoplasm. In terms of biological role, ubiquitin-like protein which plays an important role in cell cycle control and embryogenesis. Covalent attachment to its substrates requires prior activation by the E1 complex uba-3-ula-1 and linkage to the E2 enzyme ubc-12. Attachment of ned-8 to cullins activates their associated E3 ubiquitin ligase activity, and thus promotes polyubiquitination and proteasomal degradation of cyclins and other regulatory proteins. This is Ubiquitin-like protein NEDD8 (ned-8) from Caenorhabditis elegans.